We begin with the raw amino-acid sequence, 176 residues long: Disulfide bond formation protein B (176 aa).

The Cytoplasmic portion of the chain corresponds to Met1 to Gln11. The helical transmembrane segment at Val12 to Phe28 threads the bilayer. The Periplasmic portion of the chain corresponds to Leu29–Ile46. Cys38 and Cys41 are disulfide-bonded. Residues Gly47–Pro63 traverse the membrane as a helical segment. At Lys64–Leu70 the chain is on the cytoplasmic side. A helical membrane pass occupies residues Leu71 to Gly88. The Periplasmic portion of the chain corresponds to Arg89–Glu145. Residues Cys104 and Cys131 are joined by a disulfide bond. A helical membrane pass occupies residues Gln146–Arg164. Residues Ile165–Arg176 lie on the Cytoplasmic side of the membrane.

Belongs to the DsbB family.

Its subcellular location is the cell inner membrane. Functionally, required for disulfide bond formation in some periplasmic proteins. Acts by oxidizing the DsbA protein. The sequence is that of Disulfide bond formation protein B from Psychrobacter cryohalolentis (strain ATCC BAA-1226 / DSM 17306 / VKM B-2378 / K5).